The chain runs to 539 residues: Glucose-6-phosphate isomerase (539 aa).

The Proton donor role is filled by E349. Residues H380 and K508 contribute to the active site.

It belongs to the GPI family.

It is found in the cytoplasm. The catalysed reaction is alpha-D-glucose 6-phosphate = beta-D-fructose 6-phosphate. Its pathway is carbohydrate biosynthesis; gluconeogenesis. The protein operates within carbohydrate degradation; glycolysis; D-glyceraldehyde 3-phosphate and glycerone phosphate from D-glucose: step 2/4. Its function is as follows. Catalyzes the reversible isomerization of glucose-6-phosphate to fructose-6-phosphate. The polypeptide is Glucose-6-phosphate isomerase (Caulobacter sp. (strain K31)).